The sequence spans 222 residues: Physcion biosynthesis cluster O-methyltransferase (222 aa).

Belongs to the methyltransferase superfamily.

It carries out the reaction emodin + S-adenosyl-L-methionine = physcion + S-adenosyl-L-homocysteine. The protein operates within secondary metabolite biosynthesis. In terms of biological role, O-methyltransferase; part of the gene cluster that mediates the biosynthesis of physcion, a natural anthraquinone fungicide that can prevent plant fungal infections. Within the pathway, the O-methyltransferase AcOMT catalyzes the last step by transferring a methyl group to C-6 hydroxyl of emodin to form physcion. AcOMT may also methylate the C-6 hydroxyl group of emodin anthrone to produce physcion-anthrone B. The pathway begins with the polyketide synthase AcPKS that condenses 8 malonyl-CoA units to synthesize atrochrysone thioester which is released from the synthase by the atrochrysone carboxyl ACP thioesterase AcTE that breaks the thioester bond and leads to free atrochrysone carboxylic acid. Spontaneous decarboxylation of atrochrysone carboxylic acid leads to the formation of atrochrysone. Then, atrochrysone undergoes spontaneous dehydration and oxidation, giving the products emodin anthrone and emodin. The O-methyltransferase AcOMT then methylates the C-6 hydroxyl of emodin to form physcion. In Aspergillus chevalieri (Eurotium chevalieri), this protein is Physcion biosynthesis cluster O-methyltransferase.